Here is an 881-residue protein sequence, read N- to C-terminus: Probable alpha/beta-glucosidase agdC (881 aa).

Positions 1–14 (MLRSLLLLAPLVGA) are cleaved as a signal peptide. N-linked (GlcNAc...) asparagine glycosylation is found at Asn-171, Asn-293, and Asn-373. Asp-422 acts as the Nucleophile in catalysis. The active site involves Glu-425. A disordered region spans residues 440–485 (YARDNDLPPAAPPVRPSNPRPLPGFPGDFQPSSSSKRSTKGSKVGL). The span at 448–463 (PAAPPVRPSNPRPLPG) shows a compositional bias: pro residues. Asn-506 carries an N-linked (GlcNAc...) asparagine glycan. Catalysis depends on Asp-571, which acts as the Proton donor. Asn-572, Asn-608, and Asn-742 each carry an N-linked (GlcNAc...) asparagine glycan.

This sequence belongs to the glycosyl hydrolase 31 family.

The protein resides in the secreted. The enzyme catalyses Hydrolysis of terminal, non-reducing (1-&gt;4)-linked alpha-D-glucose residues with release of alpha-D-glucose.. It catalyses the reaction Hydrolysis of terminal, non-reducing beta-D-glucosyl residues with release of beta-D-glucose.. Functionally, glucosidase involved in the degradation of cellulosic biomass. Has both alpha- and beta-glucosidase activity. In Aspergillus fumigatus (strain CBS 144.89 / FGSC A1163 / CEA10) (Neosartorya fumigata), this protein is Probable alpha/beta-glucosidase agdC (agdC).